Here is a 414-residue protein sequence, read N- to C-terminus: Transcriptional repressor protein YY1 (414 aa).

An interaction with the SMAD1/SMAD4 complex region spans residues 1 to 170; sequence MASGDTLYIA…GGGSSSSGGG (170 aa). A disordered region spans residues 33 to 81; that stretch reads VETIETTVVGEEEEEDDDDEDGGGGDHGGGGGHGHAGHHHHHHHHHHHP. Residues 42–55 are compositionally biased toward acidic residues; it reads GEEEEEDDDDEDGG. Gly residues predominate over residues 57-66; sequence GDHGGGGGHG. Residues 67 to 81 show a composition bias toward basic residues; that stretch reads HAGHHHHHHHHHHHP. Residues 116–260 form a gly-rich region involved in interaction with HCFC1 region; that stretch reads DDSDGLRAED…YSEYMTGKKL (145 aa). Serine 118 bears the Phosphoserine; by CK2 mark. The segment at 157–203 is disordered; the sequence is GKSGGGGSSSSGGGRVKKGGGKKSGKKSYLSGGAGAAGGGGADPGNK. Residues 158-170 are compositionally biased toward gly residues; sequence KSGGGGSSSSGGG. Positions 171–182 are enriched in basic residues; that stretch reads RVKKGGGKKSGK. Glycyl lysine isopeptide (Lys-Gly) (interchain with G-Cter in SUMO2) cross-links involve residues lysine 182 and lysine 183. Serine 187 is subject to Phosphoserine. Positions 188–199 are enriched in gly residues; that stretch reads GGAGAAGGGGAD. Residues lysine 208 and lysine 230 each participate in a glycyl lysine isopeptide (Lys-Gly) (interchain with G-Cter in SUMO2) cross-link. Serine 247 is modified (phosphoserine). The tract at residues 257-341 is involved in nuclear matrix association; the sequence is GKKLPPGGIP…KAFVESSKLK (85 aa). Glycyl lysine isopeptide (Lys-Gly) (interchain with G-Cter in SUMO2) cross-links involve residues lysine 286 and lysine 288. The segment at 295–414 is binding to DNA; that stretch reads TIACPHKGCT…LTHAKAKNNQ (120 aa). 3 consecutive C2H2-type zinc fingers follow at residues 296–320, 325–347, and 353–377; these read IACP…LHTH, HVCA…QLVH, and FQCT…VRIH. Residues cysteine 298, cysteine 303, histidine 316, histidine 320, cysteine 327, cysteine 330, histidine 343, histidine 347, cysteine 355, cysteine 360, histidine 373, and histidine 377 each coordinate Zn(2+). An involved in repression of activated transcription region spans residues 333–371; it reads AFVESSKLKRHQLVHTGEKPFQCTFEGCGKRFSLDFNLR. An involved in masking transactivation domain region spans residues 371-397; that stretch reads RTHVRIHTGDRPYVCPFDGCNKKFAQS. Threonine 378 is subject to Phosphothreonine. Residues 383–407 form a C2H2-type 4 zinc finger; the sequence is YVCPFDGCNKKFAQSTNLKSHILTH. Zn(2+) is bound by residues cysteine 385, cysteine 390, histidine 403, and histidine 407. Residues lysine 409 and lysine 411 each participate in a glycyl lysine isopeptide (Lys-Gly) (interchain with G-Cter in SUMO2) cross-link.

This sequence belongs to the YY transcription factor family. Interacts with YAF2 through the region encompassing the first and second zinc fingers. Component of the chromatin remodeling INO80 complex; specifically part of a complex module associated with the DBINO domain of INO80. Interacts with EED and EZH2; the interactions are indicative for an association with the PRC2/EED-EZH2 complex. Interacts with SFMBT2. Found in a complex with SMAD1 and SMAD4. Found in a complex with YY1, SIN3A and HDAC1. Accessory component of the polycomb repressive deubiquitinase (PR-DUB) complex, at least composed of BAP1, one of ASXL1, ASXL2 or (probably) ASXL3 and one of MBD5 or MBD6; the PR-DUB core associates with a number of accessory proteins, including FOXK1, FOXK2, KDM1B, HCFC1, YY1 and OGT. Interacts (via Gly-rich region) with HCFC1; the interaction is direct. Interacts (via C-terminal zinc-finger domains) with BAP1 (via ULD domain); the interaction is direct and requires HCFC1. Post-translationally, phosphorylation at Ser-118 by CK2 prevents proteolytic cleavage by caspase-7 (CASP7) during apoptosis. In terms of processing, proteolytically cleaved by caspase-7 (CASP7) in response to apoptosis. Phosphorylation at Ser-118 protects against proteolytic cleavage. Transiently poly-ADP-ribosylated by PARP1 upon DNA damage, with the effect of decreasing affinity of YY1 to its cognate DNA binding sites. Post-translationally, ubiquitinated.

It localises to the nucleus matrix. In terms of biological role, multifunctional transcription factor that exhibits positive and negative control on a large number of cellular and viral genes by binding to sites overlapping the transcription start site. Binds to the consensus sequence 5'-CCGCCATNTT-3'; some genes have been shown to contain a longer binding motif allowing enhanced binding; the initial CG dinucleotide can be methylated greatly reducing the binding affinity. The effect on transcription regulation is depending upon the context in which it binds and diverse mechanisms of action include direct activation or repression, indirect activation or repression via cofactor recruitment, or activation or repression by disruption of binding sites or conformational DNA changes. Its activity is regulated by transcription factors and cytoplasmic proteins that have been shown to abrogate or completely inhibit YY1-mediated activation or repression. For example, it acts as a repressor in absence of adenovirus E1A protein but as an activator in its presence. Acts synergistically with the SMAD1 and SMAD4 in bone morphogenetic protein (BMP)-mediated cardiac-specific gene expression. Binds to SMAD binding elements (SBEs) (5'-GTCT/AGAC-3') within BMP response element (BMPRE) of cardiac activating regions. May play an important role in development and differentiation. Proposed to recruit the PRC2/EED-EZH2 complex to target genes that are transcriptional repressed. Involved in DNA repair. In vitro, binds to DNA recombination intermediate structures (Holliday junctions). Plays a role in regulating enhancer activation. Recruits the PR-DUB complex to specific gene-regulatory regions. Its function is as follows. Proposed core component of the chromatin remodeling INO80 complex which is involved in transcriptional regulation, DNA replication and probably DNA repair; proposed to target the INO80 complex to YY1-responsive elements. The protein is Transcriptional repressor protein YY1 (YY1) of Homo sapiens (Human).